The primary structure comprises 182 residues: Large ribosomal subunit protein uL6 (182 aa).

Belongs to the universal ribosomal protein uL6 family. As to quaternary structure, part of the 50S ribosomal subunit.

Its function is as follows. This protein binds to the 23S rRNA, and is important in its secondary structure. It is located near the subunit interface in the base of the L7/L12 stalk, and near the tRNA binding site of the peptidyltransferase center. The protein is Large ribosomal subunit protein uL6 of Desulforamulus reducens (strain ATCC BAA-1160 / DSM 100696 / MI-1) (Desulfotomaculum reducens).